The primary structure comprises 301 residues: GTPase Era (301 aa).

In terms of domain architecture, Era-type G spans 8 to 174; sequence KSGFVALVGR…LKTLKDYLPE (167 aa). A G1 region spans residues 16 to 23; that stretch reads GRPNVGKS. 16-23 is a binding site for GTP; it reads GRPNVGKS. Residues 42-46 are G2; it reads QTTRN. The G3 stretch occupies residues 63 to 66; that stretch reads DTPG. Residues 63–67 and 124–127 each bind GTP; these read DTPGI and NKID. The segment at 124–127 is G4; it reads NKID. Positions 153-155 are G5; it reads ISA. The region spanning 197–282 is the KH type-2 domain; that stretch reads IREQILRLTD…NLKLWVKVRR (86 aa).

It belongs to the TRAFAC class TrmE-Era-EngA-EngB-Septin-like GTPase superfamily. Era GTPase family. As to quaternary structure, monomer.

Its subcellular location is the cytoplasm. It is found in the cell membrane. An essential GTPase that binds both GDP and GTP, with rapid nucleotide exchange. Plays a role in 16S rRNA processing and 30S ribosomal subunit biogenesis and possibly also in cell cycle regulation and energy metabolism. This chain is GTPase Era, found in Lactobacillus delbrueckii subsp. bulgaricus (strain ATCC 11842 / DSM 20081 / BCRC 10696 / JCM 1002 / NBRC 13953 / NCIMB 11778 / NCTC 12712 / WDCM 00102 / Lb 14).